We begin with the raw amino-acid sequence, 351 residues long: Purine permease 3 (351 aa).

The next 10 membrane-spanning stretches (helical) occupy residues 4-24 (ALVI…PLIM), 35-55 (IWFS…PLLF), 72-92 (FFLI…LSGF), 108-128 (TAAL…FFMV), 132-152 (FTPF…VLGM), 168-188 (ITGF…LPLV), 207-227 (FQLI…FIAG), 249-269 (VAVF…GLIF), 274-294 (LVSG…AVIF), and 304-324 (GLSL…EIKS). Residues 45–152 (GFPVIFIPLL…LTVGAAVLGM (108 aa)) form the EamA domain. The interval 329 to 351 (RRIQQEESQETEQSSLSRPISEC) is disordered.

Belongs to the purine permeases (TC 2.A.7.14) family. As to expression, restricted to pollen.

The protein resides in the membrane. In terms of biological role, may be involved in transport of purine derivatives during pollen germination and tube elongation. This Arabidopsis thaliana (Mouse-ear cress) protein is Purine permease 3 (PUP3).